A 351-amino-acid chain; its full sequence is MQIASSPFTHNQRSTRRIMLLVILACIPGIIAQTYFFGYGSLIQVMLAMITALLAEGAVLQLRKQPVMARLQDNSALLTALLLGISLPPLAPWWMIVLGTLFAIVIAKQLYGGLGQNPFNPAMVGYVVLLISFPVQMTSWLPPLPLQGTSVGFYDSLLTIFTGYTHSGENIHQLQVGYDGISQATPLDTFKTSLRSQPADQILQQPIFGGVLAGLGWQWVNIGFLVGGLLLLWRKAIHWHIPVSFLLALGGCAAVSWMIAPQSFASPMLHLFSGATMLGAFFIATDPVSASTTPRGRLIFGALIGILVWLIRVYGGYPDGVAFAVLLANITVPLIDHYTQPRVYGHKSGHK.

4 helical membrane-spanning segments follow: residues Ile18 to Gly38, Gly40 to Leu60, Leu87 to Ala107, and Pro121 to Leu141. Residue Thr185 is modified to FMN phosphoryl threonine. A run of 5 helical transmembrane segments spans residues Val211–Leu231, Ile241–Pro261, Phe264–Ala284, Leu298–Pro318, and Gly320–Gln340.

Belongs to the NqrB/RnfD family. In terms of assembly, the complex is composed of six subunits: RnfA, RnfB, RnfC, RnfD, RnfE and RnfG. The cofactor is FMN.

The protein resides in the cell inner membrane. In terms of biological role, part of a membrane-bound complex that couples electron transfer with translocation of ions across the membrane. This Yersinia pseudotuberculosis serotype I (strain IP32953) protein is Ion-translocating oxidoreductase complex subunit D.